The following is a 410-amino-acid chain: Multifunctional CCA protein (410 aa).

The ATP site is built by G8 and R11. Residues G8 and R11 each coordinate CTP. Residues D21 and D23 each coordinate Mg(2+). ATP-binding residues include R91, R138, and R141. R91, R138, and R141 together coordinate CTP. Positions 229 to 347 (TGIHQEMVSD…AQLALVCEAD (119 aa)) constitute an HD domain.

Belongs to the tRNA nucleotidyltransferase/poly(A) polymerase family. Bacterial CCA-adding enzyme type 1 subfamily. As to quaternary structure, monomer. Can also form homodimers and oligomers. It depends on Mg(2+) as a cofactor. Requires Ni(2+) as cofactor.

The catalysed reaction is a tRNA precursor + 2 CTP + ATP = a tRNA with a 3' CCA end + 3 diphosphate. The enzyme catalyses a tRNA with a 3' CCA end + 2 CTP + ATP = a tRNA with a 3' CCACCA end + 3 diphosphate. Functionally, catalyzes the addition and repair of the essential 3'-terminal CCA sequence in tRNAs without using a nucleic acid template. Adds these three nucleotides in the order of C, C, and A to the tRNA nucleotide-73, using CTP and ATP as substrates and producing inorganic pyrophosphate. tRNA 3'-terminal CCA addition is required both for tRNA processing and repair. Also involved in tRNA surveillance by mediating tandem CCA addition to generate a CCACCA at the 3' terminus of unstable tRNAs. While stable tRNAs receive only 3'-terminal CCA, unstable tRNAs are marked with CCACCA and rapidly degraded. The chain is Multifunctional CCA protein from Xanthomonas axonopodis pv. citri (strain 306).